Reading from the N-terminus, the 1049-residue chain is Toll-like receptor 7 (1049 aa).

The N-terminal stretch at 1-26 is a signal peptide; the sequence is MVFPMWTLKRQILILFNIILISKLLG. Residues 27 to 839 lie on the Extracellular side of the membrane; that stretch reads ARWFPKTLPC…LYTCELDLTN (813 aa). LRR repeat units lie at residues 43–64, 65–87, 110–126, 127–149, 151–170, and 171–195; these read PKNHVIVDCTDKHLTEIPGGIP, TNTTNLTLTINHIPDISPASFHR, NMCIKRLQIKPRSFSGL, TYLKSLYLDGNQLLEIPQGLPPS, QLLSLEANNIFSIRKENLTE, and LANIEILYLGQNCYYRNPCYVSYSI. N66 and N69 each carry an N-linked (GlcNAc...) asparagine glycan. Residue N167 is glycosylated (N-linked (GlcNAc...) asparagine). Residues N202 and N215 are each glycosylated (N-linked (GlcNAc...) asparagine). 9 LRR repeats span residues 203-226, 228-247, 248-275, 289-312, 314-337, 339-368, 369-392, 396-419, and 421-443; these read LTKLKVLSLKDNNVTAVPTVLPST, TELYLYNNMIAKIQEDDFNN, LNQLQILDLSGNCPRCYNAPFPCAPCKN, LTELKVLRLHSNSLQHVPPRWFKN, NKLQELDLSQNFLAKEIGDAKFLH, LPSLIQLDLSFNFELQVYRASMNLSQAFSS, LKSLKILRIRGYVFKELKSFNLSP, LQNLEVLDLGTNFIKIANLSMFKQ, and KRLKVIDLSVNKISPSGDSSEVG. Residue N361 is glycosylated (N-linked (GlcNAc...) asparagine). N413 is a glycosylation site (N-linked (GlcNAc...) asparagine). N-linked (GlcNAc...) asparagine glycosylation is present at N488. LRR repeat units lie at residues 492-515, 516-540, 541-564, and 566-588; these read YKYGQTLDLSKNSIFFVKSSDFQH, LSFLKCLNLSGNLISQTLNGSEFQP, LAELRYLDFSNNRLDLLHSTAFEE, and HKLEVLDISSNSHYFQSEGITHM. N-linked (GlcNAc...) asparagine glycans are attached at residues N523 and N534. The N-linked (GlcNAc...) asparagine glycan is linked to N590. LRR repeat units follow at residues 595 to 618, 619 to 644, 649 to 672, 674 to 697, 698 to 721, 723 to 745, 746 to 769, and 772 to 795; these read LKVLQKLMMNDNDISSSTSRTMES, ESLRTLEFRGNHLDVLWREGDNRYLQ, LLKLEELDISKNSLSFLPSGVFDG, PPNLKNLSLAKNGLKSFSWKKLQC, LKNLETLDLSHNQLTTVPERLSNC, RSLKNLILKNNQIRSLTKYFLQD, AFQLRYLDLSSNKIQMIQKTSFPE, and LNNLKMLLLHHNRFLCTCDAVWFV. N679 and N720 each carry an N-linked (GlcNAc...) asparagine glycan. N-linked (GlcNAc...) asparagine glycosylation is present at N799. Residues 840 to 860 form a helical membrane-spanning segment; sequence LILFSLSISVSLFLMVMMTAS. The Cytoplasmic segment spans residues 861–1049; that stretch reads HLYFWDVWYI…AYSQVFKETV (189 aa). A TIR domain is found at 889-1033; the sequence is CCYDAFIVYD…YFWQCLKNAL (145 aa).

It belongs to the Toll-like receptor family. As to quaternary structure, homodimer. Interacts with MYD88 via their respective TIR domains. Interacts with UNC93B1. Interacts with SMPDL3B. In terms of tissue distribution, detected in brain, placenta, spleen, stomach, small intestine, lung and in plasmacytoid pre-dendritic cells. Expressed in peripheral mononuclear blood cells.

The protein localises to the endoplasmic reticulum membrane. It localises to the endosome. The protein resides in the lysosome. It is found in the cytoplasmic vesicle. Its subcellular location is the phagosome. With respect to regulation, activated by guanosine analogs including deoxyguanosine, 7-thia-8-oxoguanosine or 7-deazaguanosine in a RNA-independent manner. Activated by imiquimod. Its function is as follows. Endosomal receptor that plays a key role in innate and adaptive immunity. Controls host immune response against pathogens through recognition of uridine-containing single strand RNAs (ssRNAs) of viral origin or guanosine analogs. Upon binding to agonists, undergoes dimerization that brings TIR domains from the two molecules into direct contact, leading to the recruitment of TIR-containing downstream adapter MYD88 through homotypic interaction. In turn, the Myddosome signaling complex is formed involving IRAK4, IRAK1, TRAF6, TRAF3 leading to activation of downstream transcription factors NF-kappa-B and IRF7 to induce pro-inflammatory cytokines and interferons, respectively. In plasmacytoid dendritic cells, RNASET2 endonuclease cooperates with PLD3 or PLD4 5'-&gt;3' exonucleases to process RNA and release 2',3'-cyclic guanosine monophosphate (2',3'-cGMP) and cytidine-rich RNA fragments that occupy TLR7 ligand-binding pockets and trigger a signaling-competent state. The chain is Toll-like receptor 7 from Homo sapiens (Human).